Reading from the N-terminus, the 1003-residue chain is Spheroidin (1003 aa).

Ser-2 carries the post-translational modification N-acetylserine; by host. Residues 953–970 are compositionally biased toward low complexity; sequence DANSSSSDSCSDSSSSSE. The disordered stretch occupies residues 953–979; the sequence is DANSSSSDSCSDSSSSSESESDSDGCC.

As to quaternary structure, may form disulfide-bond-linked aggregates.

In terms of biological role, major component of viral occlusion bodies, the protective complexes in which the virions are embedded in the cytoplasm of their insect hosts. The chain is Spheroidin from Amsacta (AmEPV).